The following is a 388-amino-acid chain: Gastricsin (388 aa).

An N-terminal signal peptide occupies residues 1–16 (MKWLLVALVCLHLLEA). Residues 17 to 59 (AVIKVPLRKFKSIRETLKEKGLLKEFLNTHKYDPALKYRFGDF) constitute a propeptide, activation peptide. The Peptidase A1 domain maps to 73–385 (YFGEISIGTP…DMANNRVGFA (313 aa)). The active site involves Asp-91. Cystine bridges form between Cys-104-Cys-109 and Cys-267-Cys-271. Residue Asp-276 is part of the active site. A disulfide bridge links Cys-310 with Cys-343.

This sequence belongs to the peptidase A1 family.

The protein resides in the secreted. It catalyses the reaction More restricted specificity than pepsin A, but shows preferential cleavage at Tyr-|-Xaa bonds. High activity on hemoglobin.. Hydrolyzes a variety of proteins. This Oryctolagus cuniculus (Rabbit) protein is Gastricsin (PGC).